The sequence spans 155 residues: Low molecular weight phosphotyrosine protein phosphatase 1 (155 aa).

C9 acts as the Nucleophile in catalysis. The active site involves R15. The active-site Proton donor is D124.

This sequence belongs to the low molecular weight phosphotyrosine protein phosphatase family. As to expression, cone cells and primary pigment cells in developing pupal retina.

It localises to the cytoplasm. The enzyme catalyses O-phospho-L-tyrosyl-[protein] + H2O = L-tyrosyl-[protein] + phosphate. The catalysed reaction is a phosphate monoester + H2O = an alcohol + phosphate. Acts on tyrosine phosphorylated proteins, low-MW aryl phosphates and natural and synthetic acyl phosphates. In Drosophila melanogaster (Fruit fly), this protein is Low molecular weight phosphotyrosine protein phosphatase 1 (primo-1).